Consider the following 320-residue polypeptide: Ferrochelatase (320 aa).

Positions 194 and 275 each coordinate Fe cation.

Belongs to the ferrochelatase family. As to quaternary structure, monomer.

It localises to the cytoplasm. The enzyme catalyses heme b + 2 H(+) = protoporphyrin IX + Fe(2+). Its pathway is porphyrin-containing compound metabolism; protoheme biosynthesis; protoheme from protoporphyrin-IX: step 1/1. Catalyzes the ferrous insertion into protoporphyrin IX. The sequence is that of Ferrochelatase from Escherichia coli O45:K1 (strain S88 / ExPEC).